The chain runs to 42 residues: Photosystem I reaction center subunit IX (42 aa).

A helical transmembrane segment spans residues 7–27 (YLSIAPVLATLWFGFLVGSLI).

This sequence belongs to the PsaJ family.

The protein localises to the plastid membrane. In terms of biological role, may help in the organization of the PsaE and PsaF subunits. This is Photosystem I reaction center subunit IX from Aneura mirabilis (Parasitic liverwort).